The primary structure comprises 493 residues: Acetyl-coenzyme A carboxylase carboxyl transferase subunit beta (493 aa).

The CoA carboxyltransferase N-terminal domain occupies 231–493 (LWVQCENCYG…FKLHAFFPLN (263 aa)). Positions 235, 238, 254, and 257 each coordinate Zn(2+). The C4-type zinc-finger motif lies at 235–257 (CENCYGLNYKKFLKSKINLCEQC).

The protein belongs to the AccD/PCCB family. As to quaternary structure, acetyl-CoA carboxylase is a heterohexamer composed of biotin carboxyl carrier protein, biotin carboxylase and 2 subunits each of ACCase subunit alpha and ACCase plastid-coded subunit beta (accD). The cofactor is Zn(2+).

It localises to the plastid stroma. It carries out the reaction N(6)-carboxybiotinyl-L-lysyl-[protein] + acetyl-CoA = N(6)-biotinyl-L-lysyl-[protein] + malonyl-CoA. Its pathway is lipid metabolism; malonyl-CoA biosynthesis; malonyl-CoA from acetyl-CoA: step 1/1. In terms of biological role, component of the acetyl coenzyme A carboxylase (ACC) complex. Biotin carboxylase (BC) catalyzes the carboxylation of biotin on its carrier protein (BCCP) and then the CO(2) group is transferred by the transcarboxylase to acetyl-CoA to form malonyl-CoA. The sequence is that of Acetyl-coenzyme A carboxylase carboxyl transferase subunit beta from Epifagus virginiana (Beechdrops).